Here is a 429-residue protein sequence, read N- to C-terminus: Probable M18 family aminopeptidase 2 (429 aa).

Residues His82, His156, and His401 each coordinate Zn(2+).

The protein belongs to the peptidase M18 family. Zn(2+) is required as a cofactor.

The sequence is that of Probable M18 family aminopeptidase 2 from Pseudomonas paraeruginosa (strain DSM 24068 / PA7) (Pseudomonas aeruginosa (strain PA7)).